The primary structure comprises 721 residues: Peptide-N(4)-(N-acetyl-beta-glucosaminyl)asparagine amidase (721 aa).

4 residues coordinate Zn(2+): Cys-193, Cys-196, Cys-225, and Cys-228. The Nucleophile role is filled by Cys-251. Active-site residues include His-278 and Asp-295.

This sequence belongs to the transglutaminase-like superfamily. PNGase family. Requires Zn(2+) as cofactor.

The protein localises to the cytoplasm. The enzyme catalyses Hydrolysis of an N(4)-(acetyl-beta-D-glucosaminyl)asparagine residue in which the glucosamine residue may be further glycosylated, to yield a (substituted) N-acetyl-beta-D-glucosaminylamine and a peptide containing an aspartate residue.. Functionally, specifically deglycosylates the denatured form of N-linked glycoproteins in the cytoplasm and assists their proteasome-mediated degradation. Cleaves the beta-aspartyl-glucosamine (GlcNAc) of the glycan and the amide side chain of Asn, converting Asn to Asp. Prefers proteins containing high-mannose over those bearing complex type oligosaccharides. Can recognize misfolded proteins in the endoplasmic reticulum that are exported to the cytosol to be destroyed and deglycosylate them, while it has no activity toward native proteins. Deglycosylation is a prerequisite for subsequent proteasome-mediated degradation of some, but not all, misfolded glycoproteins. The chain is Peptide-N(4)-(N-acetyl-beta-glucosaminyl)asparagine amidase (PNG1) from Arabidopsis thaliana (Mouse-ear cress).